The sequence spans 434 residues: Putative peptidase B (434 aa).

Residues Lys-198 and Asp-203 each coordinate Mn(2+). Residue Lys-210 is part of the active site. The Mn(2+) site is built by Asp-221, Asp-280, and Glu-282. Arg-284 is an active-site residue.

It belongs to the peptidase M17 family. In terms of assembly, homohexamer. It depends on Mn(2+) as a cofactor.

The protein resides in the cytoplasm. The catalysed reaction is Release of an N-terminal amino acid, Xaa, from a peptide or arylamide. Xaa is preferably Glu or Asp but may be other amino acids, including Leu, Met, His, Cys and Gln.. Probably plays an important role in intracellular peptide degradation. This chain is Putative peptidase B, found in Haemophilus influenzae (strain ATCC 51907 / DSM 11121 / KW20 / Rd).